The chain runs to 132 residues: Glycine cleavage system H protein (132 aa).

In terms of domain architecture, Lipoyl-binding spans 27-109; that stretch reads FATIGISAFA…FDFGWILKVK (83 aa). N6-lipoyllysine is present on K68.

The protein belongs to the GcvH family. The glycine cleavage system is composed of four proteins: P, T, L and H. Requires (R)-lipoate as cofactor.

Its function is as follows. The glycine cleavage system catalyzes the degradation of glycine. The H protein shuttles the methylamine group of glycine from the P protein to the T protein. In Rhodopirellula baltica (strain DSM 10527 / NCIMB 13988 / SH1), this protein is Glycine cleavage system H protein.